The following is a 95-amino-acid chain: Co-chaperonin GroES (95 aa).

Belongs to the GroES chaperonin family. In terms of assembly, heptamer of 7 subunits arranged in a ring. Interacts with the chaperonin GroEL.

It is found in the cytoplasm. Functionally, together with the chaperonin GroEL, plays an essential role in assisting protein folding. The GroEL-GroES system forms a nano-cage that allows encapsulation of the non-native substrate proteins and provides a physical environment optimized to promote and accelerate protein folding. GroES binds to the apical surface of the GroEL ring, thereby capping the opening of the GroEL channel. The chain is Co-chaperonin GroES from Desulfotalea psychrophila (strain LSv54 / DSM 12343).